The following is a 174-amino-acid chain: ATP-dependent protease subunit HslV (174 aa).

Thr2 is an active-site residue. Na(+)-binding residues include Gly157, Asp160, and Thr163.

It belongs to the peptidase T1B family. HslV subfamily. As to quaternary structure, a double ring-shaped homohexamer of HslV is capped on each side by a ring-shaped HslU homohexamer. The assembly of the HslU/HslV complex is dependent on binding of ATP.

Its subcellular location is the cytoplasm. It carries out the reaction ATP-dependent cleavage of peptide bonds with broad specificity.. Allosterically activated by HslU binding. Functionally, protease subunit of a proteasome-like degradation complex believed to be a general protein degrading machinery. This chain is ATP-dependent protease subunit HslV, found in Aliivibrio fischeri (strain MJ11) (Vibrio fischeri).